Here is a 622-residue protein sequence, read N- to C-terminus: Mitochondrial Rho GTPase 2 (622 aa).

Residues 1-596 (MRRDVRILLL…ELHPTPFWLR (596 aa)) are Cytoplasmic-facing. Positions 2-168 (RRDVRILLLG…FYYAQKAVLH (167 aa)) constitute a Miro 1 domain. GTP is bound by residues glycine 16, lysine 17, threonine 18, and serine 19. Threonine 18 is a Mg(2+) binding site. Aspartate 57 is a binding site for Mg(2+). Residue serine 59 coordinates GTP. Lysine 96 participates in a covalent cross-link: Glycyl lysine isopeptide (Lys-Gly) (interchain with G-Cter in ubiquitin). The GTP site is built by asparagine 118, lysine 119, aspartate 121, alanine 149, and lysine 150. Lysine 119 participates in a covalent cross-link: Glycyl lysine isopeptide (Lys-Gly) (interchain with G-Cter in ubiquitin). Lysine 164 is covalently cross-linked (Glycyl lysine isopeptide (Lys-Gly) (interchain with G-Cter in ubiquitin)). 2 EF-hand domains span residues 184-219 (ACAQ…CFGH) and 304-339 (RGYQ…FSVA). Ca(2+) contacts are provided by aspartate 197, aspartate 199, aspartate 201, glutamate 208, aspartate 317, aspartate 319, aspartate 321, and glutamate 328. The region spanning 415–580 (RSVLMCKVLG…FTQLATMATF (166 aa)) is the Miro 2 domain. GTP contacts are provided by glycine 427, glycine 429, lysine 430, serine 431, and alanine 432. Position 431 (serine 431) interacts with Mg(2+). Glutamate 475 lines the Mg(2+) pocket. GTP-binding residues include lysine 529, aspartate 531, and cysteine 560. The helical; Anchor for type IV membrane protein transmembrane segment at 597–619 (GVLVAVGTAVAAVLSFSLYRVLV) threads the bilayer. Residues 620–622 (KSR) lie on the Mitochondrial intermembrane side of the membrane.

The protein belongs to the mitochondrial Rho GTPase family. As to quaternary structure, homodimer. Interacts with the kinesin-binding proteins TRAK1/OIP106 and TRAK2/GRIF1, forming a link between mitochondria and the trafficking apparatus of the microtubules. Interacts with ARMCX3. Found in a complex with KIF5B, OGT, RHOT1 and TRAK1. Post-translationally, ubiquitinated by PRKN in a PINK1-dependent manner, leading to its degradation.

The protein resides in the mitochondrion outer membrane. The catalysed reaction is GTP + H2O = GDP + phosphate + H(+). It catalyses the reaction ATP + H2O = ADP + phosphate + H(+). The enzyme catalyses UTP + H2O = UDP + phosphate + H(+). Functionally, atypical mitochondrial nucleoside-triphosphatase (NTPase) involved in mitochondrial trafficking. Probably involved in control of anterograde transport of mitochondria and their subcellular distribution. Can hydrolyze GTP, ATP and UTP. This chain is Mitochondrial Rho GTPase 2 (Rhot2), found in Rattus norvegicus (Rat).